The sequence spans 462 residues: Solute carrier family 41 member 3 (462 aa).

The next 9 helical transmembrane spans lie at 41–61, 121–141, 163–183, 194–214, 225–245, 258–278, 351–371, 380–400, and 424–444; these read CQVA…GLVM, LAVV…ASLM, VITA…IVIG, IATP…LALM, WYLT…WIFI, YGWF…LILS, VLLF…CLVE, IFVL…LYLA, and GLGD…DWLL.

Belongs to the SLC41A transporter family.

The protein localises to the mitochondrion inner membrane. The enzyme catalyses Mg(2+)(in) + 2 Na(+)(out) = Mg(2+)(out) + 2 Na(+)(in). Functionally, na(+)/Mg(2+) ion exchanger that acts as a predominant Mg(2+) efflux system at the mitochondrial inner membrane. In Rattus norvegicus (Rat), this protein is Solute carrier family 41 member 3 (Slc41a3).